Reading from the N-terminus, the 1359-residue chain is MRVGVSESEDSDGHVIEDEDLEMARQIENERKEKRAQKLKEKREREGKPPPKKRPAKKRKASSSEEDDDDEEESPRKSSKKSRKRAKSESESDESDEEEDRKKSKSKKKVDQKKKEKSKKKRTTSSSEDEDSDEEREQKSKKKSKKTKKQTSSESSEESEEERKVKKSKKNKEKSVKKRAETSEESDEDEKPSKKSKKGLKKKAKSESESESEDEKEVKKSKKKSKKVVKKESESEDEAPEKKKTEKRKRSKTSSEESSESEKSDEEEEEKESSPKPKKKKPLAVKKLSSDEESEESDVEVLPQKKKRGAVTLISDSEDEKDQKSESEASDVEEKVSKKKAKKQESSESGSDSSEGSITVNRKSKKKEKPEKKKKGIIMDSSKLQKETIDAERAEKERRKRLEKKQKEFNGIVLEEGEDLTEMLTGTSSQRKLKSVVLDPDSSTVDEESKKPVEVHNSLVRILKPHQAHGIQFMYDCACESLDRLDTEGSGGILAHCMGLGKTLQVITFLHTVLMHEKIGEKCKRVLVVVPKNVIINWFKEFQKWLVDNDEELDTIDVNELDSYKTIEDRRRALKAWHSSKTPSVMIIGYDLFRILTVEDDPKKKKPKNRNRRLEKAKEDFRKYLQNPGPDMVVCDEAHKLKNDDSALSKCMVKILTKRRICLTGTPLQNNLMEYHCMVNFVKPGLLGTKTEFANRFVNIINRGRTKDASPLEVSFMKRRCHVLYDHLKKCVDRKDYRVLTEAIPPKQEYVINVRQTERQCALYNAFLNDIVGDSGLSKRLLPDYHMFSRIWTHPYQLVLHEQRMERERVMREDAEEEADFIDDGDGSESESEGSFKSGSESDSGKSVVLSSDDEGSSKKKKNGNKPEIKKTAPQKKRKFLNSDDEDEEDGEDTAMAILQDGIRQSKRLAGEEADLRDTDTPPEYTGWFARLGLVKEEDRDDFALSNKLILLVEIIKKCEEIGDKLLVFSQSLESLTLIKRMLEYMAGTGQWFADGHEALNAEGEETWSWLEGEDYMTIDGSVQSGKRDAVQTSFNDPLNLRARLMLISTRAGSLGTNMVAANRVIIFDACWNPSHDTQSLFRVYRFGQTKPVYIYRFIAQGTMEERIYKRQVTKESTSMRVVDEAQIQRHYLGNDLTELYQFTPSTFDPDVEISCAPPKDRLLADVIHKNQHAVVDYIEHDTLFANVEDEKLTEQEMKDAWTDYEKDKSGMPVRAQYAAPPMPGFPNGMIVGQNVQALLQNRMNQGIRVDQMQHDILFKELQKMRIKDAGTAVKIVLLRNLLEQILPYIPDEMRGGMSEFNTHFIRLVHETDRKMETPADLLRKSLESFKTVIKMVKMIPTCREPLARMTRDYPYLFA.

The tract at residues 1-402 (MRVGVSESED…RAEKERRKRL (402 aa)) is disordered. Basic and acidic residues predominate over residues 11–49 (SDGHVIEDEDLEMARQIENERKEKRAQKLKEKREREGKP). The span at 50-61 (PPKKRPAKKRKA) shows a compositional bias: basic residues. Positions 64 to 73 (SEEDDDDEEE) are enriched in acidic residues. 6 stretches are compositionally biased toward basic residues: residues 77–86 (KSSKKSRKRA), 103–123 (KSKS…KKRT), 139–149 (KSKKKSKKTKK), 165–177 (VKKS…KSVK), 194–204 (KKSKKGLKKKA), and 219–229 (KKSKKKSKKVV). Over residues 257-271 (ESSESEKSDEEEEEK) the composition is skewed to acidic residues. Residues 321 to 336 (KDQKSESEASDVEEKV) show a composition bias toward basic and acidic residues. Positions 347–357 (SESGSDSSEGS) are enriched in low complexity. Over residues 362 to 376 (RKSKKKEKPEKKKKG) the composition is skewed to basic residues. Over residues 383–397 (KLQKETIDAERAEKE) the composition is skewed to basic and acidic residues. Residues 483–685 (DRLDTEGSGG…HCMVNFVKPG (203 aa)) enclose the Helicase ATP-binding domain. Position 496–503 (496–503 (HCMGLGKT)) interacts with ATP. A DEAH box motif is present at residues 636-639 (DEAH). Residues 809 to 891 (RVMREDAEEE…NSDDEDEEDG (83 aa)) are disordered. Acidic residues predominate over residues 814–832 (DAEEEADFIDDGDGSESES). Positions 833-847 (EGSFKSGSESDSGKS) are enriched in low complexity. Positions 951 to 1134 (LLVEIIKKCE…EAQIQRHYLG (184 aa)) constitute a Helicase C-terminal domain.

It belongs to the SNF2/RAD54 helicase family.

The protein resides in the nucleus. The enzyme catalyses ATP + H2O = ADP + phosphate + H(+). Required for embryonic development and gonadogenesis. Also, functions redundantly with the transcriptional repressor lin-35 to regulate somatic gonad development. The sequence is that of Transcriptional regulator ATRX homolog from Caenorhabditis elegans.